A 360-amino-acid polypeptide reads, in one-letter code: Phosphoserine aminotransferase (360 aa).

R42 is an L-glutamate binding site. Pyridoxal 5'-phosphate contacts are provided by residues 76–77 (AR), W102, T153, D172, and Q195. K196 bears the N6-(pyridoxal phosphate)lysine mark. Residue 237 to 238 (NT) coordinates pyridoxal 5'-phosphate.

This sequence belongs to the class-V pyridoxal-phosphate-dependent aminotransferase family. SerC subfamily. In terms of assembly, homodimer. Requires pyridoxal 5'-phosphate as cofactor.

It is found in the cytoplasm. The enzyme catalyses O-phospho-L-serine + 2-oxoglutarate = 3-phosphooxypyruvate + L-glutamate. It catalyses the reaction 4-(phosphooxy)-L-threonine + 2-oxoglutarate = (R)-3-hydroxy-2-oxo-4-phosphooxybutanoate + L-glutamate. It participates in amino-acid biosynthesis; L-serine biosynthesis; L-serine from 3-phospho-D-glycerate: step 2/3. Its pathway is cofactor biosynthesis; pyridoxine 5'-phosphate biosynthesis; pyridoxine 5'-phosphate from D-erythrose 4-phosphate: step 3/5. Its function is as follows. Catalyzes the reversible conversion of 3-phosphohydroxypyruvate to phosphoserine and of 3-hydroxy-2-oxo-4-phosphonooxybutanoate to phosphohydroxythreonine. The sequence is that of Phosphoserine aminotransferase from Photobacterium profundum (strain SS9).